The sequence spans 1305 residues: Nonribosomal peptide synthetase hkm11 (1305 aa).

Residues 278–672 (TYGELDRWAK…GEIEHHLRPK (395 aa)) form an adenylation region. In terms of domain architecture, Carrier spans 788–864 (APTTEQEALL…SLASRMRQYN (77 aa)). An O-(pantetheine 4'-phosphoryl)serine modification is found at Ser-825. The condensation stretch occupies residues 926-1166 (KGQLDRHQLQ…LCLNITAVRV (241 aa)).

This sequence belongs to the NRP synthetase family.

The enzyme catalyses hancockiamide D + (E)-cinnamate + ATP = hancockiamide A + AMP + diphosphate. It carries out the reaction hancockiamide H + (E)-cinnamate + ATP = hancockiamide G + AMP + diphosphate. Its pathway is secondary metabolite biosynthesis. Functionally, nonribosomal peptide synthetase; part of the gene cluster that mediates the biosynthesis of hancockiamides, an unusual new family of N-cinnamoylated piperazines. The NRPS hkm10 and the NmrA-like reductase hkm9 are proposed to convert two molecules of L-Phe to the intermediary piperazine called xenocockiamide A. Xenocockiamide A is then converted to hancockiamide D via a series of hydroxylations and O-methylations. The tyrosinase hkm6 may catalyze an aromatic hydroxylation, then the 2-oxoglutarate-dependent Fe(II) dioxygenase hkm4 and the FAD-dependent phenol hydroxylase hkm7 may catalyze consecutive hydroxylations to install 2 more hydroxy groups, and the methyltransferase hkm8 probably catalyzes two methylations using 2 molecules of S-adenosyl-L-methionine (SAM). The NRPS hkm11 activates and transfers trans-cinnamate supplied by the PAL hkm12 to hancockiamide D and produces hancockiamide A. NRPS Hkm11 has the flexibility to tolerate the bulky hancockiamide G as a substrate and the absence of the acetyl-transferase hkm3 opens up the opportunity for hkm11 to introduce a second N-cinnamoyl moiety. The cytochrome P450 monooxygenase hkm5 catalyzes the methylenedioxy bridge formation, converting hancockiamide A into hancockiamide G. Hkm5 can also convert hancockiamide B into hancockiamide C, and hancockiamide D into hancockiamide H. The N-acetyltransferase hkm3 finally transfers an acetyl group to 1-N of piperazine, converting hancockiamide A into hancockiamide B and hancockiamide G into hancockiamide C. This Aspergillus hancockii protein is Nonribosomal peptide synthetase hkm11.